The primary structure comprises 483 residues: MLFRSVILSNALLLPACAHDILSNLDLSLPIAANAESYTDCANAAWPPSNVGVELVPQPPDDQLRAMVDEVSAENIEATITKLVSFGTRHTLSTFNSSTRGINAARDWIASEMRKYAAESNGTMTVEVQSYVQSVASRIPFPVTISNVLAKATGSEDPNRVYVMTGHYDSRVTDVLNYESDAPGANDDASGTAIAMELARVLAKHQPKSTIILGAVAGEEQGLYGSTYLAQTLKNTSTNVEGMLNCDIVGSSTGDRGQKDPFTIRAFAQGPPPISAESSARAAQRLQIGGENDSPARELARFSAEVAANNATGMNVAIIYRLDRFLRGGDHTGFLQAGYPAIRYTEPNENFAHQHQDIRTENGTVYGDLIEFVDFDFTARVGKVNLATLWSLAQAPAMPRNVTIDATILDNNSRIKWIVSNKTDVASYEVVWRSTIASLWTHMLDVGKVGYVVLPLSKDNVIFGIRAVGTNGFKSPAVYPFPA.

Residues 1 to 18 form the signal peptide; it reads MLFRSVILSNALLLPACA. Residues N96 and N121 are each glycosylated (N-linked (GlcNAc...) asparagine). Positions 167, 187, and 220 each coordinate Zn(2+). Residue N235 is glycosylated (N-linked (GlcNAc...) asparagine). D247 lines the Zn(2+) pocket. N-linked (GlcNAc...) asparagine glycans are attached at residues N310, N362, N401, N411, and N421. A Fibronectin type-III domain is found at 396–483; that stretch reads PAMPRNVTID…KSPAVYPFPA (88 aa).

It belongs to the peptidase M28 family. M28B subfamily. Requires Zn(2+) as cofactor.

It is found in the secreted. In Pyrenophora teres f. teres (strain 0-1) (Barley net blotch fungus), this protein is Probable zinc metalloprotease PTT_08196.